The chain runs to 1384 residues: Contactin-associated protein 1 (1384 aa).

Positions 1 to 19 (MMHLRLFCILLAAVSGAEG) are cleaved as a signal peptide. Topologically, residues 20–1283 (WGYYGCDEEL…PYYHDEGWVA (1264 aa)) are extracellular. Positions 25–168 (CDEELVGPLY…IGLRLGLYGC (144 aa)) constitute an F5/8 type C domain. The cysteines at positions 25 and 168 are disulfide-linked. N-linked (GlcNAc...) asparagine glycosylation is found at Asn120, Asn128, and Asn276. Laminin G-like domains lie at 203 to 355 (FKTE…AFRC) and 389 to 538 (FRTW…FDTC). Residues Cys323 and Cys355 are joined by a disulfide bond. Residues Asn420, Asn499, and Asn518 are each glycosylated (N-linked (GlcNAc...) asparagine). Disulfide bonds link Cys506/Cys538, Cys544/Cys555, Cys549/Cys564, and Cys566/Cys576. Residues 540-577 (ITDRCSPNMCEHDGRCYQSWDDFICYCELTGYKGETCH) form the EGF-like 1 domain. The Fibrinogen C-terminal domain occupies 576–795 (CHTPLYKESC…NTISFHTGAA (220 aa)). Asn597, Asn653, Asn664, Asn763, Asn804, Asn843, Asn860, Asn948, and Asn956 each carry an N-linked (GlcNAc...) asparagine glycan. Residues 813–956 (FRTSAPSGVF…ANASEGTSPN (144 aa)) enclose the Laminin G-like 3 domain. 4 disulfides stabilise this stretch: Cys930–Cys957, Cys961–Cys974, Cys968–Cys983, and Cys985–Cys995. The 40-residue stretch at 957–996 (CTGHCAHPRLPCFHGGRCVERYSYYTCDCDLTAFDGPYCN) folds into the EGF-like 2 domain. 2 N-linked (GlcNAc...) asparagine glycosylation sites follow: Asn1078 and Asn1147. A Laminin G-like 4 domain is found at 1088–1250 (FSTSSAPAVL…VQGELSESNC (163 aa)). Cys1209 and Cys1250 are oxidised to a cystine. The chain crosses the membrane as a helical span at residues 1284-1304 (ILLGFLVAFLLLGLVGMLVLF). At 1305–1384 (YLQNHRYKGS…PQILEESRSE (80 aa)) the chain is on the cytoplasmic side. A compositionally biased stretch (basic and acidic residues) spans 1319 to 1328 (EPKAAHEYHP). Residues 1319-1384 (EPKAAHEYHP…PQILEESRSE (66 aa)) are disordered. Residues 1328–1369 (PGSKPPLPTSGPAQVPTPTAAPNQAPASAPAPAPTPAPAPGP) carry the SH3-binding motif. The segment covering 1339–1355 (PAQVPTPTAAPNQAPAS) has biased composition (low complexity). The segment covering 1356–1368 (APAPAPTPAPAPG) has biased composition (pro residues). Phosphoserine is present on Ser1383.

It belongs to the neurexin family. In terms of assembly, interacts with CNTN1/contactin in cis form. Predominantly expressed in brain. Weak expression detected in ovary, pancreas, colon, lung, heart, intestine and testis.

It localises to the membrane. The protein localises to the cell junction. The protein resides in the paranodal septate junction. Its function is as follows. Required, with CNTNAP2, for radial and longitudinal organization of myelinated axons. Plays a role in the formation of functional distinct domains critical for saltatory conduction of nerve impulses in myelinated nerve fibers. Demarcates the paranodal region of the axo-glial junction. In association with contactin involved in the signaling between axons and myelinating glial cells. This is Contactin-associated protein 1 (CNTNAP1) from Homo sapiens (Human).